Here is an 87-residue protein sequence, read N- to C-terminus: U3-theraphotoxin-Hhn1a 10 (87 aa).

The signal sequence occupies residues 1-24 (MVNMEASMFLTFAGLVLLFVVCYA). Residues 25–52 (SESEEKEFPKEMLSSIFAVDNDFKQEER) constitute a propeptide that is removed on maturation. Disulfide bonds link Cys54/Cys67, Cys61/Cys72, and Cys66/Cys79.

The protein belongs to the neurotoxin 10 (Hwtx-1) family. 51 (Hntx-8) subfamily. Hntx-8 sub-subfamily. As to expression, expressed by the venom gland.

It is found in the secreted. Its function is as follows. Ion channel inhibitor. The sequence is that of U3-theraphotoxin-Hhn1a 10 from Cyriopagopus hainanus (Chinese bird spider).